We begin with the raw amino-acid sequence, 453 residues long: Secreted triacylglycerol lipase LIP3 (453 aa).

Positions 1-19 (MKLGIVAFTLISFAAQALA) are cleaved as a signal peptide. Residue Asn-98 is glycosylated (N-linked (GlcNAc...) asparagine). A disulfide bridge connects residues Cys-115 and Cys-284. Ser-197 (nucleophile) is an active-site residue. N-linked (GlcNAc...) asparagine glycosylation occurs at Asn-230. Residues Asp-344 and His-378 contribute to the active site. Cysteines 360 and 406 form a disulfide.

This sequence belongs to the AB hydrolase superfamily. Lipase family. Class Lip subfamily.

The protein localises to the secreted. The protein resides in the cell wall. It carries out the reaction a triacylglycerol + H2O = a diacylglycerol + a fatty acid + H(+). The enzyme catalyses a monoacylglycerol + H2O = glycerol + a fatty acid + H(+). The catalysed reaction is a diacylglycerol + H2O = a monoacylglycerol + a fatty acid + H(+). In terms of biological role, secreted lipase involved in Dandruff and seborrheic dermatitis (D/SD) probably via lipase-mediated breakdown of sebaceous lipids and release of irritating free fatty acids. Has triacylglycerol lipase activity and is able to hydrolyze triolein, tristearin, trilinolein, tripalmitoylglycerol and trihexadecenoin. Hydrolyzes diacylglycerols such as distearin, dilinolein, dipalmitoylglycerol and dipalmitolein. Mostly converts monoolein to di- and triolein, while free fatty acids are only produced in low amounts. This Malassezia globosa (strain ATCC MYA-4612 / CBS 7966) (Dandruff-associated fungus) protein is Secreted triacylglycerol lipase LIP3.